The chain runs to 702 residues: Protein-glucosylgalactosylhydroxylysine glucosidase (702 aa).

310–311 is a binding site for substrate; that stretch reads WD. Catalysis depends on glutamate 440, which acts as the Proton donor. 508 to 509 is a substrate binding site; the sequence is KQ.

Belongs to the glycosyl hydrolase 65 family.

The catalysed reaction is (5R)-5-O-[alpha-D-glucosyl-(1-&gt;2)-beta-D-galactosyl]-5-hydroxy-L-lysyl-[collagen] + H2O = (5R)-5-O-(beta-D-galactosyl)-5-hydroxy-L-lysyl-[collagen] + D-glucose. Its function is as follows. Catalyzes the hydrolysis of glucose from the disaccharide unit linked to hydroxylysine residues of collagen and collagen-like proteins. This chain is Protein-glucosylgalactosylhydroxylysine glucosidase, found in Gallus gallus (Chicken).